Reading from the N-terminus, the 224-residue chain is Orotate phosphoribosyltransferase (224 aa).

Residues lysine 26, 73–74, arginine 100, lysine 101, lysine 104, histidine 106, and 127–135 contribute to the 5-phospho-alpha-D-ribose 1-diphosphate site; these read YK and EDVTTSGKS. 2 residues coordinate orotate: threonine 131 and arginine 160.

The protein belongs to the purine/pyrimidine phosphoribosyltransferase family. PyrE subfamily. Homodimer. Mg(2+) is required as a cofactor.

The catalysed reaction is orotidine 5'-phosphate + diphosphate = orotate + 5-phospho-alpha-D-ribose 1-diphosphate. The protein operates within pyrimidine metabolism; UMP biosynthesis via de novo pathway; UMP from orotate: step 1/2. Catalyzes the transfer of a ribosyl phosphate group from 5-phosphoribose 1-diphosphate to orotate, leading to the formation of orotidine monophosphate (OMP). This is Orotate phosphoribosyltransferase from Clostridium botulinum (strain Eklund 17B / Type B).